A 590-amino-acid chain; its full sequence is O-fucosyltransferase 2 (590 aa).

Basic and acidic residues predominate over residues 1 to 16; that stretch reads MGQERPNDEERPESRD. Residues 1–26 form a disordered region; it reads MGQERPNDEERPESRDLGVYGCSPPH. Residues 67-87 traverse the membrane as a helical; Signal-anchor for type II membrane protein segment; sequence TAIGVMAILGFFCLVNWFMLS. A glycan (N-linked (GlcNAc...) asparagine) is linked at asparagine 125. 365–367 is a substrate binding site; the sequence is HLR. Residues asparagine 485 and asparagine 546 are each glycosylated (N-linked (GlcNAc...) asparagine).

This sequence belongs to the glycosyltransferase GT106 family.

The protein localises to the membrane. The protein operates within glycan metabolism. This chain is O-fucosyltransferase 2, found in Arabidopsis thaliana (Mouse-ear cress).